Here is a 194-residue protein sequence, read N- to C-terminus: MIDIGELLRAYRKGYFPMSDPSDGKLYWCQPYNRAIIPMESYRPSRDVRRLLRRNDFRVRFNTDFEGVIRACAAPRPNAVETWISESIIESYLELNRLGIAHSVESWYGDELAGGLYGLAIGGAFFGESMFYRRSYASRIAFDRLVMHLRKRGYLLLDAQIMNPHLQKLGAVDIPHKAYMQMLDAALHKKIPFL.

Belongs to the L/F-transferase family.

It localises to the cytoplasm. It carries out the reaction N-terminal L-lysyl-[protein] + L-leucyl-tRNA(Leu) = N-terminal L-leucyl-L-lysyl-[protein] + tRNA(Leu) + H(+). The enzyme catalyses N-terminal L-arginyl-[protein] + L-leucyl-tRNA(Leu) = N-terminal L-leucyl-L-arginyl-[protein] + tRNA(Leu) + H(+). The catalysed reaction is L-phenylalanyl-tRNA(Phe) + an N-terminal L-alpha-aminoacyl-[protein] = an N-terminal L-phenylalanyl-L-alpha-aminoacyl-[protein] + tRNA(Phe). Functionally, functions in the N-end rule pathway of protein degradation where it conjugates Leu, Phe and, less efficiently, Met from aminoacyl-tRNAs to the N-termini of proteins containing an N-terminal arginine or lysine. In Chlorobium limicola (strain DSM 245 / NBRC 103803 / 6330), this protein is Leucyl/phenylalanyl-tRNA--protein transferase.